Here is a 673-residue protein sequence, read N- to C-terminus: UvrABC system protein B (673 aa).

In terms of domain architecture, Helicase ATP-binding spans 26 to 183 (EGLEDGLAHQ…RRLAELQYTR (158 aa)). 39 to 46 (GVTGSGKT) contacts ATP. Residues 92–115 (YYDYYQPEAYVPSSDTFIEKDASV) carry the Beta-hairpin motif. Residues 431–597 (QVDDLLSEIR…GLNKKVVDIL (167 aa)) form the Helicase C-terminal domain. Residues 633-668 (QQKIHELEGQMMQHAQNLEFEEAAQIRDQLHQLREL) form the UVR domain.

It belongs to the UvrB family. Forms a heterotetramer with UvrA during the search for lesions. Interacts with UvrC in an incision complex.

The protein localises to the cytoplasm. Functionally, the UvrABC repair system catalyzes the recognition and processing of DNA lesions. A damage recognition complex composed of 2 UvrA and 2 UvrB subunits scans DNA for abnormalities. Upon binding of the UvrA(2)B(2) complex to a putative damaged site, the DNA wraps around one UvrB monomer. DNA wrap is dependent on ATP binding by UvrB and probably causes local melting of the DNA helix, facilitating insertion of UvrB beta-hairpin between the DNA strands. Then UvrB probes one DNA strand for the presence of a lesion. If a lesion is found the UvrA subunits dissociate and the UvrB-DNA preincision complex is formed. This complex is subsequently bound by UvrC and the second UvrB is released. If no lesion is found, the DNA wraps around the other UvrB subunit that will check the other stand for damage. The protein is UvrABC system protein B of Salmonella heidelberg (strain SL476).